We begin with the raw amino-acid sequence, 70 residues long: DNA-directed RNA polymerase subunit omega (70 aa).

The protein belongs to the RNA polymerase subunit omega family. In terms of assembly, the RNAP catalytic core consists of 2 alpha, 1 beta, 1 beta' and 1 omega subunit. When a sigma factor is associated with the core the holoenzyme is formed, which can initiate transcription.

It catalyses the reaction RNA(n) + a ribonucleoside 5'-triphosphate = RNA(n+1) + diphosphate. In terms of biological role, promotes RNA polymerase assembly. Latches the N- and C-terminal regions of the beta' subunit thereby facilitating its interaction with the beta and alpha subunits. The polypeptide is DNA-directed RNA polymerase subunit omega (Bacillus cytotoxicus (strain DSM 22905 / CIP 110041 / 391-98 / NVH 391-98)).